Here is an 83-residue protein sequence, read N- to C-terminus: Protein ShK-like4 (83 aa).

The N-terminal stretch at 1–21 (MDTRVIAVLFVAIMVLSSTNA) is a signal peptide. Positions 22–48 (LPKQKGSYKNMNHADFLKGLDRASSKR) are excised as a propeptide. 3 cysteine pairs are disulfide-bonded: cysteine 50–cysteine 82, cysteine 57–cysteine 75, and cysteine 67–cysteine 79. Residues 50–83 (CRDSHWSCFFQSNYEDICSTAQAEECALSCGLCE) form the ShKT domain.

Post-translationally, contains 3 disulfide bonds. In terms of tissue distribution, expressed in various neurons (ectodermal sensory cells) (in planulae and primary polyps). Not expressed in nematocytes.

In terms of biological role, probable neuropeptide. This chain is Protein ShK-like4, found in Nematostella vectensis (Starlet sea anemone).